The primary structure comprises 68 residues: Large ribosomal subunit protein bL35 (68 aa).

This sequence belongs to the bacterial ribosomal protein bL35 family.

The chain is Large ribosomal subunit protein bL35 from Onion yellows phytoplasma (strain OY-M).